Consider the following 218-residue polypeptide: Hypoxanthine-guanine phosphoribosyltransferase (218 aa).

K69 contributes to the GMP binding site. An N6-acetyllysine modification is found at K103. Residue K115 forms a Glycyl lysine isopeptide (Lys-Gly) (interchain with G-Cter in SUMO1); alternate linkage. K115 participates in a covalent cross-link: Glycyl lysine isopeptide (Lys-Gly) (interchain with G-Cter in SUMO2); alternate. Residues 134–142 (EDIIDTGKT), K166, 186–188 (KFV), and D194 each bind GMP. The active-site Proton acceptor is the D138. T142 is subject to Phosphothreonine. D194 is a binding site for Mg(2+).

The protein belongs to the purine/pyrimidine phosphoribosyltransferase family. In terms of assembly, homotetramer. It depends on Mg(2+) as a cofactor.

Its subcellular location is the cytoplasm. It catalyses the reaction IMP + diphosphate = hypoxanthine + 5-phospho-alpha-D-ribose 1-diphosphate. The catalysed reaction is GMP + diphosphate = guanine + 5-phospho-alpha-D-ribose 1-diphosphate. Its pathway is purine metabolism; IMP biosynthesis via salvage pathway; IMP from hypoxanthine: step 1/1. Its function is as follows. Converts guanine to guanosine monophosphate, and hypoxanthine to inosine monophosphate. Transfers the 5-phosphoribosyl group from 5-phosphoribosylpyrophosphate onto the purine. Plays a central role in the generation of purine nucleotides through the purine salvage pathway. This chain is Hypoxanthine-guanine phosphoribosyltransferase (Hprt1), found in Mus musculus (Mouse).